The sequence spans 334 residues: Cytoskeleton protein RodZ (334 aa).

Topologically, residues M1–G111 are cytoplasmic. The HTH cro/C1-type domain maps to L19–L71. A DNA-binding region (H-T-H motif) is located at residues Q30–E49. Residues W112–W132 form a helical; Signal-anchor for type II membrane protein membrane-spanning segment. Over W133–Q334 the chain is Periplasmic. Positions A152–V210 are disordered. Residues G161 to D175 show a composition bias toward polar residues. A compositionally biased stretch (low complexity) spans T176–V210.

Belongs to the RodZ family.

Its subcellular location is the cell inner membrane. Functionally, cytoskeletal protein that is involved in cell-shape control through regulation of the length of the long axis. The chain is Cytoskeleton protein RodZ from Salmonella gallinarum (strain 287/91 / NCTC 13346).